Reading from the N-terminus, the 246-residue chain is Sensory transduction protein LytT (246 aa).

In terms of domain architecture, Response regulatory spans Lys3–Lys117. Asp54 is modified (4-aspartylphosphate). Residues Leu142–Ile246 form the HTH LytTR-type domain.

Post-translationally, phosphorylated by LytS.

The protein localises to the cytoplasm. Functionally, member of the two-component regulatory system LytS/LytT that probably regulates genes involved in cell wall metabolism. The chain is Sensory transduction protein LytT (lytT) from Bacillus anthracis.